The sequence spans 549 residues: Formate--tetrahydrofolate ligase (549 aa).

60 to 67 is an ATP binding site; that stretch reads TPYGEGKT.

This sequence belongs to the formate--tetrahydrofolate ligase family.

It carries out the reaction (6S)-5,6,7,8-tetrahydrofolate + formate + ATP = (6R)-10-formyltetrahydrofolate + ADP + phosphate. Its pathway is one-carbon metabolism; tetrahydrofolate interconversion. This Campylobacter concisus (strain 13826) protein is Formate--tetrahydrofolate ligase.